The primary structure comprises 89 residues: Small ribosomal subunit protein bS20 (89 aa).

The protein belongs to the bacterial ribosomal protein bS20 family.

Binds directly to 16S ribosomal RNA. The polypeptide is Small ribosomal subunit protein bS20 (Helicobacter pylori (strain Shi470)).